Reading from the N-terminus, the 127-residue chain is Fluoride-specific ion channel FluC (127 aa).

4 consecutive transmembrane segments (helical) span residues 3–23 (ALLLVGAGGAAGAVARYLLGV), 36–56 (GTFAANILGGFLMGLLAGGLA), 72–92 (VGALGGFTTFSAYSLEVALMI), and 101–121 (FAYSLGSVALAVAALFAGLLL). Residues glycine 76 and threonine 79 each contribute to the Na(+) site.

Belongs to the fluoride channel Fluc/FEX (TC 1.A.43) family.

It localises to the cell inner membrane. It carries out the reaction fluoride(in) = fluoride(out). With respect to regulation, na(+) is not transported, but it plays an essential structural role and its presence is essential for fluoride channel function. Fluoride-specific ion channel. Important for reducing fluoride concentration in the cell, thus reducing its toxicity. This Phenylobacterium zucineum (strain HLK1) protein is Fluoride-specific ion channel FluC.